We begin with the raw amino-acid sequence, 488 residues long: N-succinylglutamate 5-semialdehyde dehydrogenase (488 aa).

221-226 serves as a coordination point for NAD(+); that stretch reads GSSRTG. Active-site residues include Glu244 and Cys278.

It belongs to the aldehyde dehydrogenase family. AstD subfamily.

The enzyme catalyses N-succinyl-L-glutamate 5-semialdehyde + NAD(+) + H2O = N-succinyl-L-glutamate + NADH + 2 H(+). Its pathway is amino-acid degradation; L-arginine degradation via AST pathway; L-glutamate and succinate from L-arginine: step 4/5. Functionally, catalyzes the NAD-dependent reduction of succinylglutamate semialdehyde into succinylglutamate. This Pseudomonas fluorescens (strain ATCC BAA-477 / NRRL B-23932 / Pf-5) protein is N-succinylglutamate 5-semialdehyde dehydrogenase.